A 147-amino-acid chain; its full sequence is Hemoglobin subunit beta (147 aa).

An N-acetylvaline modification is found at valine 2. The Globin domain occupies 3-147 (HLTGEEKSAV…VANALAHKYH (145 aa)). The residue at position 13 (threonine 13) is a Phosphothreonine. Serine 45 carries the phosphoserine modification. Position 60 is an N6-acetyllysine (lysine 60). Histidine 64 serves as a coordination point for heme b. The residue at position 83 (lysine 83) is an N6-acetyllysine. A heme b-binding site is contributed by histidine 93. Cysteine 94 carries the post-translational modification S-nitrosocysteine. Residue lysine 145 is modified to N6-acetyllysine.

The protein belongs to the globin family. As to quaternary structure, heterotetramer of two alpha chains and two beta chains. Red blood cells.

Its function is as follows. Involved in oxygen transport from the lung to the various peripheral tissues. The chain is Hemoglobin subunit beta (HBB) from Callimico goeldii (Goeldi's marmoset).